The sequence spans 179 residues: Hypoxanthine-guanine phosphoribosyltransferase (179 aa).

Residues lysine 42 and glycine 43 each contribute to the diphosphate site. 2 residues coordinate Mg(2+): glutamate 98 and aspartate 99. Glutamate 102 serves as the catalytic Proton acceptor. GMP contacts are provided by residues lysine 130, 151–152 (FV), and aspartate 158. Arginine 164 contacts diphosphate.

This sequence belongs to the purine/pyrimidine phosphoribosyltransferase family. It depends on Mg(2+) as a cofactor.

The protein resides in the cytoplasm. The catalysed reaction is IMP + diphosphate = hypoxanthine + 5-phospho-alpha-D-ribose 1-diphosphate. It catalyses the reaction GMP + diphosphate = guanine + 5-phospho-alpha-D-ribose 1-diphosphate. It functions in the pathway purine metabolism; IMP biosynthesis via salvage pathway; IMP from hypoxanthine: step 1/1. Its pathway is purine metabolism; GMP biosynthesis via salvage pathway; GMP from guanine: step 1/1. In terms of biological role, purine salvage pathway enzyme that catalyzes the transfer of the ribosyl-5-phosphate group from 5-phospho-alpha-D-ribose 1-diphosphate (PRPP) to the N9 position of the 6-oxopurines hypoxanthine and guanine to form the corresponding ribonucleotides IMP (inosine 5'-monophosphate) and GMP (guanosine 5'-monophosphate), with the release of PPi. The chain is Hypoxanthine-guanine phosphoribosyltransferase (hpt) from Staphylococcus aureus (strain COL).